We begin with the raw amino-acid sequence, 498 residues long: Glycerol kinase (498 aa).

Thr-12 is an ADP binding site. Positions 12, 13, and 14 each coordinate ATP. Sn-glycerol 3-phosphate is bound at residue Thr-12. Arg-16 serves as a coordination point for ADP. Sn-glycerol 3-phosphate is bound by residues Arg-82, Glu-83, Tyr-134, and Asp-241. Positions 82, 83, 134, 241, and 242 each coordinate glycerol. ADP is bound by residues Thr-263 and Gly-310. 4 residues coordinate ATP: Thr-263, Gly-310, Gln-314, and Gly-411. Gly-411 and Asn-415 together coordinate ADP.

Belongs to the FGGY kinase family.

The catalysed reaction is glycerol + ATP = sn-glycerol 3-phosphate + ADP + H(+). The protein operates within polyol metabolism; glycerol degradation via glycerol kinase pathway; sn-glycerol 3-phosphate from glycerol: step 1/1. Inhibited by fructose 1,6-bisphosphate (FBP). In terms of biological role, key enzyme in the regulation of glycerol uptake and metabolism. Catalyzes the phosphorylation of glycerol to yield sn-glycerol 3-phosphate. This Janthinobacterium sp. (strain Marseille) (Minibacterium massiliensis) protein is Glycerol kinase.